Reading from the N-terminus, the 146-residue chain is Bifunctional adenosine 5'-phosphosulfate phosphorylase/adenylylsulfatase HINT4 (146 aa).

Positions 9–120 (IFCEIVRNPT…YVPRWKAIKY (112 aa)) constitute an HIT domain. The Histidine triad motif signature appears at 101 to 105 (HLHLH). Catalysis depends on His-105, which acts as the Tele-AMP-histidine intermediate.

As to quaternary structure, homodimer.

The protein localises to the peroxisome. It carries out the reaction sulfate + ADP + H(+) = adenosine 5'-phosphosulfate + phosphate. The enzyme catalyses adenosine 5'-phosphosulfate + H2O = sulfate + AMP + 2 H(+). Its activity is regulated as follows. The adenosine 5'-phosphosulfate phosphorylase activity is enhanced at low pH. In terms of biological role, possesses adenylylsulfatase activity in vitro, releasing AMP and sulfate from adenylyl sulfate. Also possesses adenosine 5'-phosphosulfate (APS) phosphorylase activity in vitro. Catalyzes the phosphorolysis of APS, leading to ADP and sulfate. This is Bifunctional adenosine 5'-phosphosulfate phosphorylase/adenylylsulfatase HINT4 from Arabidopsis thaliana (Mouse-ear cress).